The following is a 206-amino-acid chain: Ribosomal RNA small subunit methyltransferase G (206 aa).

S-adenosyl-L-methionine-binding positions include Gly74, Leu79, Val125–Glu126, and Arg140.

The protein belongs to the methyltransferase superfamily. RNA methyltransferase RsmG family.

It localises to the cytoplasm. It carries out the reaction guanosine(527) in 16S rRNA + S-adenosyl-L-methionine = N(7)-methylguanosine(527) in 16S rRNA + S-adenosyl-L-homocysteine. Specifically methylates the N7 position of guanine in position 527 of 16S rRNA. This Shewanella amazonensis (strain ATCC BAA-1098 / SB2B) protein is Ribosomal RNA small subunit methyltransferase G.